We begin with the raw amino-acid sequence, 250 residues long: uncharacterized protein (250 aa).

Residues 4–24 traverse the membrane as a helical segment; the sequence is FKYLLFLVVFAVFFLTFAFFD.

The protein localises to the membrane. This is an uncharacterized protein from Methanocaldococcus jannaschii (strain ATCC 43067 / DSM 2661 / JAL-1 / JCM 10045 / NBRC 100440) (Methanococcus jannaschii).